Here is a 288-residue protein sequence, read N- to C-terminus: NAD kinase (288 aa).

Catalysis depends on D68, which acts as the Proton acceptor. NAD(+) contacts are provided by residues 68–69 (DG), 142–143 (ND), R153, D172, and Q242.

Belongs to the NAD kinase family. A divalent metal cation serves as cofactor.

Its subcellular location is the cytoplasm. It catalyses the reaction NAD(+) + ATP = ADP + NADP(+) + H(+). Involved in the regulation of the intracellular balance of NAD and NADP, and is a key enzyme in the biosynthesis of NADP. Catalyzes specifically the phosphorylation on 2'-hydroxyl of the adenosine moiety of NAD to yield NADP. The polypeptide is NAD kinase (Desulforamulus reducens (strain ATCC BAA-1160 / DSM 100696 / MI-1) (Desulfotomaculum reducens)).